The following is a 480-amino-acid chain: MEESKTPHVAIIPSPGMGHLIPLVEFAKRLVHLHGLTVTFVIAGEGPPSKAQRTVLDSLPSSISSVFLPPVDLTDLSSSTRIESRISLTVTRSNPELRKVFDSFVEGGRLPTALVVDLFGTDAFDVAVEFHVPPYIFYPTTANVLSFFLHLPKLDETVSCEFRELTEPLMLPGCVPVAGKDFLDPAQDRKDDAYKWLLHNTKRYKEAEGILVNTFFELEPNAIKALQEPGLDKPPVYPVGPLVNIGKQEAKQTEESECLKWLDNQPLGSVLYVSFGSGGTLTCEQLNELALGLADSEQRFLWVIRSPSGIANSSYFDSHSQTDPLTFLPPGFLERTKKRGFVIPFWAPQAQVLAHPSTGGFLTHCGWNSTLESVVSGIPLIAWPLYAEQKMNAVLLSEDIRAALRPRAGDDGLVRREEVARVVKGLMEGEEGKGVRNKMKELKEAACRVLKDDGTSTKALSLVALKWKAHKKELEQNGNH.

H19 functions as the Proton acceptor in the catalytic mechanism. D117 acts as the Charge relay in catalysis. Residues S277, W346, A347, and H364 each contribute to the UDP site. The UDP-alpha-D-glucose site is built by S277, W346, A347, H364, W367, N368, S369, E372, Y386, E388, and Q389. Residues N368, S369, E372, and Y386 each contribute to the UDP site.

Belongs to the UDP-glycosyltransferase family.

The enzyme catalyses hydroquinone + UDP-alpha-D-glucose = hydroquinone O-beta-D-glucopyranoside + UDP + H(+). Functionally, bifunctional O-glycosyltransferase and N-glycosyltransferase that can detoxify xenobiotics. Possesses high activity to metabolize the persistent pollutants 2,4,5-trichlorophenol (TCP) and 3,4-dichloroaniline (DCA). Also active on benzoates and benzoate derivatives in vitro. This Arabidopsis thaliana (Mouse-ear cress) protein is UDP-glycosyltransferase 72B1 (UGT72B1).